The primary structure comprises 316 residues: ATP synthase gamma chain (316 aa).

It belongs to the ATPase gamma chain family. F-type ATPases have 2 components, CF(1) - the catalytic core - and CF(0) - the membrane proton channel. CF(1) has five subunits: alpha(3), beta(3), gamma(1), delta(1), epsilon(1). CF(0) has three main subunits: a, b and c.

The protein localises to the cellular thylakoid membrane. Produces ATP from ADP in the presence of a proton gradient across the membrane. The gamma chain is believed to be important in regulating ATPase activity and the flow of protons through the CF(0) complex. In Prochlorococcus marinus (strain MIT 9312), this protein is ATP synthase gamma chain.